Consider the following 263-residue polypeptide: Receptor-transporting protein 1 (263 aa).

The Cytoplasmic segment spans residues 1 to 238 (MRIFRPWRLR…ETGSGWNFCS (238 aa)). Residues 88-197 (ASGRFHCSWC…GEFCEACQEG (110 aa)) form a 3CxxC-type zinc finger. The chain crosses the membrane as a helical span at residues 239–259 (IPWCLFWATVLLLIIYLQLSF). The Extracellular segment spans residues 260-263 (RSSV).

The protein belongs to the TMEM7 family. In terms of assembly, interacts with olfactory receptors.

The protein resides in the cell membrane. In terms of biological role, specifically promotes functional cell surface expression of olfactory receptors, but not of other GPCRs. In Macaca fascicularis (Crab-eating macaque), this protein is Receptor-transporting protein 1 (RTP1).